The following is a 316-amino-acid chain: uncharacterized protein (316 aa).

It belongs to the chlamydial CPn_0441/CT_007/TC_0275 family.

This is an uncharacterized protein from Chlamydia trachomatis serovar D (strain ATCC VR-885 / DSM 19411 / UW-3/Cx).